A 359-amino-acid polypeptide reads, in one-letter code: Tyrosine-protein phosphatase non-receptor type 7 (359 aa).

Residues 1–34 (MVQACEGRSRAQLPTLSLGADMTQPPPAKAPAKK) form a disordered region. An interaction with MAP kinases region spans residues 38-51 (LQERRGSSVALMLD). Serine 44 bears the Phosphoserine mark. Threonine 66 is modified (phosphothreonine). A phosphoserine mark is found at serine 93 and serine 143. The Tyrosine-protein phosphatase domain maps to 97 to 349 (LEEEFLKIPS…QFLHHTLALY (253 aa)). Residues aspartate 257, 290 to 296 (CSAGIGR), and glutamine 334 each bind substrate. Cysteine 290 serves as the catalytic Phosphocysteine intermediate. Cysteine sulfenic acid (-SOH) is present on cysteine 290.

Belongs to the protein-tyrosine phosphatase family. Non-receptor class subfamily. Post-translationally, oxidized at active site cysteine. Treatment with pervanadate (vanadate and H(2)O(2)) or with antigen enhanced oxidation of active site cysteine.

It localises to the cytoplasm. The protein resides in the cytoskeleton. It carries out the reaction O-phospho-L-tyrosyl-[protein] + H2O = L-tyrosyl-[protein] + phosphate. Inhibited in cells after FCER1A triggering. Functionally, may play a role in the regulation of T and B-lymphocyte development and signal transduction. The polypeptide is Tyrosine-protein phosphatase non-receptor type 7 (Ptpn7) (Rattus norvegicus (Rat)).